The chain runs to 624 residues: LRR receptor kinase BAK1 (624 aa).

Positions 1–25 (MAAPRWAVWAVLLLRLLVPAARVLA) are cleaved as a signal peptide. Residues 26 to 237 (NMEGDALHSL…QSPGSSSSTG (212 aa)) are Extracellular-facing. LRR repeat units lie at residues 91-115 (LKNLQYLELYSNNISGTIPSELGNL), 117-139 (NLVSLDLYLNNFTGPIPDSLGNL), 140-163 (LKLRFLRLNNNSLSGSIPKSLTAI), and 164-188 (TALQVLDLSNNNLSGEVPSTGSFSL). N-linked (GlcNAc...) asparagine glycans are attached at residues asparagine 103, asparagine 114, asparagine 127, asparagine 149, and asparagine 175. Positions 205-236 (TTKPCPGAPPFSPPPPYNPPTPVQSPGSSSST) are disordered. Residues 210–227 (PGAPPFSPPPPYNPPTPV) are compositionally biased toward pro residues. Residues 238-258 (AIAGGVAAGAALLFAIPAIGF) form a helical membrane-spanning segment. Residues 259 to 624 (AWYRRRKPQE…LHAVELSGPR (366 aa)) are Cytoplasmic-facing. The Protein kinase domain maps to 301–588 (FSNKNILGRG…GLAERWEEWQ (288 aa)). ATP-binding positions include 307–315 (LGRGGFGKV) and lysine 329. Aspartate 428 acts as the Proton acceptor in catalysis.

This sequence belongs to the protein kinase superfamily. Ser/Thr protein kinase family. In terms of assembly, forms homodimers. Interacts with BRI1. Interacts with REM4.1.

It is found in the cell membrane. The catalysed reaction is L-seryl-[protein] + ATP = O-phospho-L-seryl-[protein] + ADP + H(+). The enzyme catalyses L-threonyl-[protein] + ATP = O-phospho-L-threonyl-[protein] + ADP + H(+). LRR receptor kinase involved in defense response. Does not seem to be required specifically for XA21-mediated immunity or basal resistance to Xanthomonas oryzae pv. oryzae (Xoo), or immunity to Magnaporthe oryzae. Involved in brassinosteroid (BR) signaling pathway. Acts as a coreceptor of BRI1. Forms at the plasma membrane a receptor complex with BRI1 which is activated in response to brassinolide. Phosphorylates BRI1. Required for normal plant growth and leaf development. Possesses kinase activity in vitro. The sequence is that of LRR receptor kinase BAK1 from Oryza sativa subsp. indica (Rice).